A 152-amino-acid chain; its full sequence is Eukaryotic translation initiation factor 2 subunit 3 (152 aa).

Alanine 1 carries the N-acetylalanine modification. 51-54 contributes to the GTP binding site; the sequence is NKID.

This sequence belongs to the TRAFAC class translation factor GTPase superfamily. Classic translation factor GTPase family. EIF2G subfamily. As to quaternary structure, eukaryotic translation initiation factor 2 eIF2 is a heterotrimeric complex composed of an alpha (EIF2S1), a beta (EIF2S2) and a gamma (EIF2S3) chain. eIF2 is member of the 43S pre-initiation complex (43S PIC). Interacts (via C-terminus) with CDC123; the interaction is direct.

It is found in the cytoplasm. Its subcellular location is the cytosol. Its function is as follows. Member of the eIF2 complex that functions in the early steps of protein synthesis by forming a ternary complex with GTP and initiator tRNA. This complex binds to a 40S ribosomal subunit, followed by mRNA binding to form the 43S pre-initiation complex (43S PIC). Junction of the 60S ribosomal subunit to form the 80S initiation complex is preceded by hydrolysis of the GTP bound to eIF2 and release of an eIF2-GDP binary complex. In order for eIF2 to recycle and catalyze another round of initiation, the GDP bound to eIF2 must exchange with GTP by way of a reaction catalyzed by eIF-2B. This Oryctolagus cuniculus (Rabbit) protein is Eukaryotic translation initiation factor 2 subunit 3 (EIF2S3).